A 263-amino-acid polypeptide reads, in one-letter code: E3 ubiquitin-protein ligase SINA-like 8 (263 aa).

Residues 35 to 71 (CPICCEGLTCPIFQCENGHLACSSCCPKLRNKCPACP) form an RING-type; degenerate zinc finger. The SBD stretch occupies residues 75–261 (ILESILVTCP…IKLSIVETSN (187 aa)). The segment at 78–136 (SILVTCPNDMFGCTESFLYGKKSTHEEECIFSLCSCPSLDCEYSGRYEDLYDHYKLTHI) adopts an SIAH-type zinc-finger fold. 8 residues coordinate Zn(2+): Cys83, Cys90, His102, Cys106, Cys113, Cys118, His130, and His135.

The protein belongs to the SINA (Seven in absentia) family.

The catalysed reaction is S-ubiquitinyl-[E2 ubiquitin-conjugating enzyme]-L-cysteine + [acceptor protein]-L-lysine = [E2 ubiquitin-conjugating enzyme]-L-cysteine + N(6)-ubiquitinyl-[acceptor protein]-L-lysine.. It functions in the pathway protein modification; protein ubiquitination. In terms of biological role, E3 ubiquitin-protein ligase that mediates ubiquitination and subsequent proteasomal degradation of target proteins. E3 ubiquitin ligases accept ubiquitin from an E2 ubiquitin-conjugating enzyme in the form of a thioester and then directly transfers the ubiquitin to targeted substrates. It probably triggers the ubiquitin-mediated degradation of different substrates. The polypeptide is E3 ubiquitin-protein ligase SINA-like 8 (Arabidopsis thaliana (Mouse-ear cress)).